Consider the following 693-residue polypeptide: Pentatricopeptide repeat-containing protein At2g19280 (693 aa).

PPR repeat units lie at residues 200–234 (LETVFSILIDCCIRERKVNMALKLTYKVDQFGIFP), 235–269 (SRGVCISLLKEILRVHGLELAREFVEHMLSRGRHL), 270–304 (NAAVLSLFIRKYCSDGYFDKGWELLMGMKHYGIRP), 305–339 (DIVAFTVFIDKLCKAGFLKEATSVLFKLKLFGISQ), 340–370 (DSVSVSSVIDGFCKVGKPEEAIKLIHSFRLR), 372–406 (NIFVYSSFLSNICSTGDMLRASTIFQEIFELGLLP), 407–441 (DCVCYTTMIDGYCNLGRTDKAFQYFGALLKSGNPP), 442–476 (SLTTSTILIGACSRFGSISDAESVFRNMKTEGLKL), 477–511 (DVVTYNNLMHGYGKTHQLNKVFELIDEMRSAGISP), 512–546 (DVATYNILIHSMVVRGYIDEANEIISELIRRGFVP), 547–581 (STLAFTDVIGGFSKRGDFQEAFILWFYMADLRMKP), 582–616 (DVVTCSALLHGYCKAQRMEKAIVLFNKLLDAGLKP), and 617–651 (DVVLYNTLIHGYCSVGDIEKACELIGLMVQRGMLP).

This sequence belongs to the PPR family. P subfamily.

This Arabidopsis thaliana (Mouse-ear cress) protein is Pentatricopeptide repeat-containing protein At2g19280.